The sequence spans 310 residues: D-alanine--D-alanine ligase (310 aa).

The ATP-grasp domain occupies 107–302 (KQAFQAARLT…FEDLVERILA (196 aa)). 135–188 (EFSLPVVVKPSQEGSSVGVSIVKKESEFAAAMKEAFRYDREILVEQFIKGSEVQ) contributes to the ATP binding site. 3 residues coordinate Mg(2+): aspartate 256, glutamate 269, and asparagine 271.

Belongs to the D-alanine--D-alanine ligase family. Requires Mg(2+) as cofactor. Mn(2+) serves as cofactor.

It is found in the cytoplasm. The enzyme catalyses 2 D-alanine + ATP = D-alanyl-D-alanine + ADP + phosphate + H(+). It participates in cell wall biogenesis; peptidoglycan biosynthesis. In terms of biological role, cell wall formation. The chain is D-alanine--D-alanine ligase from Geotalea uraniireducens (strain Rf4) (Geobacter uraniireducens).